A 72-amino-acid chain; its full sequence is Galensin (72 aa).

The N-terminal stretch at 1-22 is a signal peptide; the sequence is MLTLKKSMLLLFFLGLVSVSLA. Residues 23–48 constitute a propeptide that is removed on maturation; that stretch reads DDKREDEAEEGEDKRAAEEERNVEKR. Phenylalanine 71 is subject to Phenylalanine amide.

This sequence belongs to the frog skin active peptide (FSAP) family. Brevinin subfamily. As to quaternary structure, homodimer; disulfide-linked. In terms of tissue distribution, expressed by the skin glands.

The protein localises to the secreted. In terms of biological role, antibacterial activity against the Gram-positive bacterium M.luteus and the Gram-negative bacterium E.coli. This Kassina senegalensis (Senegal running frog) protein is Galensin.